Here is a 344-residue protein sequence, read N- to C-terminus: Methionine import ATP-binding protein MetN 1 (344 aa).

The ABC transporter domain occupies Ile-2–Ile-241. Residue Gly-38–Ser-45 participates in ATP binding.

It belongs to the ABC transporter superfamily. Methionine importer (TC 3.A.1.24) family. In terms of assembly, the complex is composed of two ATP-binding proteins (MetN), two transmembrane proteins (MetI) and a solute-binding protein (MetQ).

It localises to the cell inner membrane. The catalysed reaction is L-methionine(out) + ATP + H2O = L-methionine(in) + ADP + phosphate + H(+). It catalyses the reaction D-methionine(out) + ATP + H2O = D-methionine(in) + ADP + phosphate + H(+). Functionally, part of the ABC transporter complex MetNIQ involved in methionine import. Responsible for energy coupling to the transport system. This is Methionine import ATP-binding protein MetN 1 from Burkholderia ambifaria (strain ATCC BAA-244 / DSM 16087 / CCUG 44356 / LMG 19182 / AMMD) (Burkholderia cepacia (strain AMMD)).